The primary structure comprises 210 residues: Ras-related protein Rab-8 (210 aa).

15 to 22 (GDSGVGKT) provides a ligand contact to GTP. The Effector region signature appears at 37–45 (FISTIGIDF). Residues 63-67 (DTAGQ) and 121-124 (NKCD) contribute to the GTP site. C207 is modified (cysteine methyl ester). C207 is lipidated: S-geranylgeranyl cysteine. Positions 208 to 210 (SLL) are cleaved as a propeptide — removed in mature form.

It belongs to the small GTPase superfamily. Rab family.

It is found in the cell membrane. The chain is Ras-related protein Rab-8 from Diplobatis ommata (Ocellated electric ray).